The sequence spans 589 residues: V-type ATP synthase alpha chain (589 aa).

232 to 239 (GPFGSGKT) is a binding site for ATP.

Belongs to the ATPase alpha/beta chains family.

The catalysed reaction is ATP + H2O + 4 H(+)(in) = ADP + phosphate + 5 H(+)(out). Produces ATP from ADP in the presence of a proton gradient across the membrane. The V-type alpha chain is a catalytic subunit. The protein is V-type ATP synthase alpha chain of Acetivibrio thermocellus (strain ATCC 27405 / DSM 1237 / JCM 9322 / NBRC 103400 / NCIMB 10682 / NRRL B-4536 / VPI 7372) (Clostridium thermocellum).